The following is a 269-amino-acid chain: Embryonic polyadenylate-binding protein 2 (269 aa).

The interval 26–54 (EAQGWGAWGRTEKTSLVPSAGSDKEAEEN) is disordered. The RRM domain maps to 139 to 216 (RSVYVGNVDY…RVIKVLPKRT (78 aa)). The interval 240–269 (LQGSLQRKPRLRPHGQSRGRGRASPWFSPY) is disordered. A compositionally biased stretch (basic residues) spans 246 to 260 (RKPRLRPHGQSRGRG).

Its subcellular location is the cytoplasm. Functionally, binds the poly(A) tail of mRNA. The sequence is that of Embryonic polyadenylate-binding protein 2 (Pabpn1l) from Rattus norvegicus (Rat).